Here is a 628-residue protein sequence, read N- to C-terminus: tRNA uridine 5-carboxymethylaminomethyl modification enzyme MnmG (628 aa).

FAD contacts are provided by residues 14–19 (GAGHAG), V126, and S181. Position 273–287 (273–287 (GPRYCPSIEDKVVRF)) interacts with NAD(+). An FAD-binding site is contributed by Q370.

This sequence belongs to the MnmG family. In terms of assembly, homodimer. Heterotetramer of two MnmE and two MnmG subunits. The cofactor is FAD.

It is found in the cytoplasm. NAD-binding protein involved in the addition of a carboxymethylaminomethyl (cmnm) group at the wobble position (U34) of certain tRNAs, forming tRNA-cmnm(5)s(2)U34. The polypeptide is tRNA uridine 5-carboxymethylaminomethyl modification enzyme MnmG (Pelobacter propionicus (strain DSM 2379 / NBRC 103807 / OttBd1)).